A 283-amino-acid chain; its full sequence is Elongation factor Ts (283 aa).

The involved in Mg(2+) ion dislocation from EF-Tu stretch occupies residues 82–85 (TDFV).

It belongs to the EF-Ts family.

Its subcellular location is the cytoplasm. Its function is as follows. Associates with the EF-Tu.GDP complex and induces the exchange of GDP to GTP. It remains bound to the aminoacyl-tRNA.EF-Tu.GTP complex up to the GTP hydrolysis stage on the ribosome. The polypeptide is Elongation factor Ts (Photorhabdus laumondii subsp. laumondii (strain DSM 15139 / CIP 105565 / TT01) (Photorhabdus luminescens subsp. laumondii)).